A 383-amino-acid chain; its full sequence is S-adenosylmethionine synthase 1 (383 aa).

His15 serves as a coordination point for ATP. Asp17 is a binding site for Mg(2+). Glu43 provides a ligand contact to K(+). L-methionine-binding residues include Glu56 and Gln99. The interval 99-109 (QSPDINLGVSR) is flexible loop. Residues 162–164 (DGK), 228–229 (RF), Asp237, 243–244 (RK), Ala260, and Lys264 each bind ATP. Asp237 provides a ligand contact to L-methionine. Position 268 (Lys268) interacts with L-methionine.

Belongs to the AdoMet synthase family. In terms of assembly, homotetramer; dimer of dimers. Mg(2+) serves as cofactor. Requires K(+) as cofactor.

Its subcellular location is the cytoplasm. The catalysed reaction is L-methionine + ATP + H2O = S-adenosyl-L-methionine + phosphate + diphosphate. It functions in the pathway amino-acid biosynthesis; S-adenosyl-L-methionine biosynthesis; S-adenosyl-L-methionine from L-methionine: step 1/1. Catalyzes the formation of S-adenosylmethionine (AdoMet) from methionine and ATP. The overall synthetic reaction is composed of two sequential steps, AdoMet formation and the subsequent tripolyphosphate hydrolysis which occurs prior to release of AdoMet from the enzyme. This chain is S-adenosylmethionine synthase 1, found in Rhodopseudomonas palustris (strain BisB18).